Here is a 252-residue protein sequence, read N- to C-terminus: Type III pantothenate kinase (252 aa).

Position 6–13 (aspartate 6–threonine 13) interacts with ATP. Substrate is bound at residue glycine 104 to arginine 107. Aspartate 106 functions as the Proton acceptor in the catalytic mechanism. Aspartate 126 is a K(+) binding site. Threonine 129 provides a ligand contact to ATP. Threonine 180 contributes to the substrate binding site.

It belongs to the type III pantothenate kinase family. In terms of assembly, homodimer. The cofactor is NH4(+). K(+) is required as a cofactor.

The protein resides in the cytoplasm. It catalyses the reaction (R)-pantothenate + ATP = (R)-4'-phosphopantothenate + ADP + H(+). The protein operates within cofactor biosynthesis; coenzyme A biosynthesis; CoA from (R)-pantothenate: step 1/5. Its function is as follows. Catalyzes the phosphorylation of pantothenate (Pan), the first step in CoA biosynthesis. In Fervidobacterium nodosum (strain ATCC 35602 / DSM 5306 / Rt17-B1), this protein is Type III pantothenate kinase.